Here is a 349-residue protein sequence, read N- to C-terminus: Heat-inducible transcription repressor HrcA (349 aa).

Belongs to the HrcA family.

Negative regulator of class I heat shock genes (grpE-dnaK-dnaJ and groELS operons). Prevents heat-shock induction of these operons. The sequence is that of Heat-inducible transcription repressor HrcA from Xylella fastidiosa (strain 9a5c).